A 475-amino-acid polypeptide reads, in one-letter code: Putative aldehyde dehydrogenase (475 aa).

Residues 146–147 and 223–224 each bind NAD(+); these read WN and GS. The active-site Proton acceptor is Glu245. Leu246 is a binding site for NAD(+). Cys279 serves as the catalytic Nucleophile. Glu379 contacts NAD(+).

This sequence belongs to the aldehyde dehydrogenase family.

The catalysed reaction is an aldehyde + NAD(+) + H2O = a carboxylate + NADH + 2 H(+). The protein is Putative aldehyde dehydrogenase of Staphylococcus aureus (strain bovine RF122 / ET3-1).